The chain runs to 227 residues: AN1-type zinc finger protein 3 (227 aa).

The A20-type zinc-finger motif lies at 12 to 44; the sequence is PSLPPRCPCGFWGSSKTMNLCSKCFADFQKKQP. 4 residues coordinate Zn(2+): cysteine 18, cysteine 20, cysteine 32, and cysteine 35. Disordered stretches follow at residues 41–100 and 113–148; these read KKQP…EECG and PTKR…ETSR. The segment covering 49–59 has biased composition (polar residues); sequence APSTSNSQSDL. Positions 66-77 are enriched in low complexity; the sequence is SDNNNTSITTPT. Polar residues-rich tracts occupy residues 78–94 and 113–127; these read LSPS…VTSP and PTKR…SENE. The span at 135 to 148 shows a compositional bias: basic and acidic residues; it reads RLLENTERSEETSR. The AN1-type zinc finger occupies 151–200; it reads QKSRRRCFQCQTKLELVQQELGSCRCGYVFCMLHRLPEQHDCTFDHMGRG. Residues cysteine 157, cysteine 160, cysteine 174, cysteine 176, cysteine 181, histidine 184, histidine 190, and cysteine 192 each contribute to the Zn(2+) site.

This chain is AN1-type zinc finger protein 3 (ZFAND3), found in Homo sapiens (Human).